The sequence spans 446 residues: Glutamyl-tRNA(Gln) amidotransferase subunit D (446 aa).

An Asparaginase/glutaminase domain is found at 90 to 421; the sequence is SEVMIISTGG…DRIKEIMLTN (332 aa). Active-site residues include T100, T176, D177, and K255.

It belongs to the asparaginase 1 family. GatD subfamily. As to quaternary structure, heterodimer of GatD and GatE.

It catalyses the reaction L-glutamyl-tRNA(Gln) + L-glutamine + ATP + H2O = L-glutaminyl-tRNA(Gln) + L-glutamate + ADP + phosphate + H(+). In terms of biological role, allows the formation of correctly charged Gln-tRNA(Gln) through the transamidation of misacylated Glu-tRNA(Gln) in organisms which lack glutaminyl-tRNA synthetase. The reaction takes place in the presence of glutamine and ATP through an activated gamma-phospho-Glu-tRNA(Gln). The GatDE system is specific for glutamate and does not act on aspartate. The sequence is that of Glutamyl-tRNA(Gln) amidotransferase subunit D from Sulfolobus acidocaldarius (strain ATCC 33909 / DSM 639 / JCM 8929 / NBRC 15157 / NCIMB 11770).